Consider the following 453-residue polypeptide: Adenylyltransferase and sulfurtransferase MOCS3 (453 aa).

Residue Thr62 is modified to Phosphothreonine. ATP-binding positions include Gly101, Asp122, 129 to 133 (SNFHR), Lys146, and 190 to 191 (DN). Zn(2+)-binding residues include Cys231 and Cys234. Cys248 serves as the catalytic Glycyl thioester intermediate; for adenylyltransferase activity. Zn(2+)-binding residues include Cys306 and Cys309. Positions 355 to 451 (QAKPHLLIDV…WTSNIDPNFP (97 aa)) constitute a Rhodanese domain. The Cysteine persulfide intermediate; for sulfurtransferase activity role is filled by Cys410.

The protein in the N-terminal section; belongs to the HesA/MoeB/ThiF family. UBA4 subfamily. It depends on Zn(2+) as a cofactor.

It localises to the cytoplasm. The protein localises to the cytosol. It carries out the reaction [molybdopterin-synthase sulfur-carrier protein]-C-terminal Gly-Gly + ATP + H(+) = [molybdopterin-synthase sulfur-carrier protein]-C-terminal Gly-Gly-AMP + diphosphate. The enzyme catalyses [molybdopterin-synthase sulfur-carrier protein]-C-terminal Gly-Gly-AMP + S-sulfanyl-L-cysteinyl-[cysteine desulfurase] + AH2 = [molybdopterin-synthase sulfur-carrier protein]-C-terminal-Gly-aminoethanethioate + L-cysteinyl-[cysteine desulfurase] + A + AMP + 2 H(+). The protein operates within tRNA modification; 5-methoxycarbonylmethyl-2-thiouridine-tRNA biosynthesis. It functions in the pathway cofactor biosynthesis; molybdopterin biosynthesis. Its function is as follows. Plays a central role in 2-thiolation of mcm(5)S(2)U at tRNA wobble positions of cytosolic tRNA(Lys), tRNA(Glu) and tRNA(Gln). Also essential during biosynthesis of the molybdenum cofactor. Acts by mediating the C-terminal thiocarboxylation of sulfur carriers URM1 and MOCS2A. Its N-terminus first activates URM1 and MOCS2A as acyl-adenylates (-COAMP), then the persulfide sulfur on the catalytic cysteine is transferred to URM1 and MOCS2A to form thiocarboxylation (-COSH) of their C-terminus. The reaction probably involves hydrogen sulfide that is generated from the persulfide intermediate and that acts as a nucleophile towards URM1 and MOCS2A. Subsequently, a transient disulfide bond is formed. Does not use thiosulfate as sulfur donor; NFS1 probably acting as a sulfur donor for thiocarboxylation reactions. The polypeptide is Adenylyltransferase and sulfurtransferase MOCS3 (Drosophila sechellia (Fruit fly)).